Reading from the N-terminus, the 332-residue chain is 3-ketodihydrosphingosine reductase (332 aa).

An N-terminal signal peptide occupies residues 1 to 25 (MLLLAAASLVAFVLLLYMVSPLISP). Residues 26–269 (KPLALPGAHV…QGNFNSSIGS (244 aa)) lie on the Cytoplasmic side of the membrane. Residues G39, S41, S42, G43, R64, K68, and D93 each contribute to the NADPH site. Positions 39-43 (GGSSG) match the GXSXG motif. S172 functions as the Proton donor in the catalytic mechanism. The Proton acceptor role is filled by Y186. NADP(+) contacts are provided by Y186 and K190. K190 functions as the Lowers pKa of active site Tyr in the catalytic mechanism. Residues 270–290 (DGYMLSSLTCGMAPVTSIMEG) form a helical membrane-spanning segment. Residues 291–292 (LQ) are Lumenal-facing. The helical transmembrane segment at 293-313 (QVVTMGLFRTIALFYLGSFDS) threads the bilayer. The Cytoplasmic portion of the chain corresponds to 314–331 (IVRRCMMQKAKLETVDKT).

It belongs to the short-chain dehydrogenases/reductases (SDR) family.

The protein localises to the endoplasmic reticulum membrane. It carries out the reaction sphinganine + NADP(+) = 3-oxosphinganine + NADPH + H(+). It participates in lipid metabolism; sphingolipid metabolism. Its function is as follows. Catalyzes the reduction of 3'-oxosphinganine (3-ketodihydrosphingosine/KDS) to sphinganine (dihydrosphingosine/DHS), the second step of de novo sphingolipid biosynthesis. In Bos taurus (Bovine), this protein is 3-ketodihydrosphingosine reductase (KDSR).